Here is a 172-residue protein sequence, read N- to C-terminus: MLSSLGNPRQAAAQLMNFALILSTAFMMWKGLSVITDSPSPIVVVLSGSMEPAFQRGDLLFLWNRNLLRETEVGEVVVYNVKDKDIPIVHRVVRKFGNGDTAELLTKGDNNLSDDTELYAKGQDYLERKDIIGSVVAYMPFVGYVTILLSEHPWLKTVMLGIMGLLVVLQRE.

The Cytoplasmic portion of the chain corresponds to M1 to Q14. Residues L15–I35 form a helical; Signal-anchor for type II membrane protein membrane-spanning segment. Over T36–E172 the chain is Lumenal. Catalysis depends on charge relay system residues S49 and H90. N-linked (GlcNAc...) asparagine glycosylation is present at N111. D115 functions as the Charge relay system in the catalytic mechanism. The tract at residues V158–L169 is C-terminal short (CTS) helix.

The protein belongs to the peptidase S26B family. As to quaternary structure, component of the signal peptidase complex (SPC) composed of a catalytic subunit SEC11 and three accessory subunits SPC1, SPC2 and SPC3. The complex induces a local thinning of the ER membrane which is used to measure the length of the signal peptide (SP) h-region of protein substrates. This ensures the selectivity of the complex towards h-regions shorter than 18-20 amino acids. SPC associates with the translocon complex.

It is found in the endoplasmic reticulum membrane. It carries out the reaction Cleavage of hydrophobic, N-terminal signal or leader sequences from secreted and periplasmic proteins.. In terms of biological role, catalytic component of the signal peptidase complex (SPC) which catalyzes the cleavage of N-terminal signal sequences from nascent proteins as they are translocated into the lumen of the endoplasmic reticulum. Specifically cleaves N-terminal signal peptides that contain a hydrophobic alpha-helix (h-region) shorter than 18-20 amino acids. In Fusarium vanettenii (strain ATCC MYA-4622 / CBS 123669 / FGSC 9596 / NRRL 45880 / 77-13-4) (Fusarium solani subsp. pisi), this protein is Signal peptidase complex catalytic subunit SEC11 (SEC11).